The chain runs to 255 residues: 5'-nucleotidase SurE (255 aa).

The a divalent metal cation site is built by aspartate 8, aspartate 9, serine 39, and asparagine 95.

It belongs to the SurE nucleotidase family. The cofactor is a divalent metal cation.

It is found in the cytoplasm. The catalysed reaction is a ribonucleoside 5'-phosphate + H2O = a ribonucleoside + phosphate. In terms of biological role, nucleotidase that shows phosphatase activity on nucleoside 5'-monophosphates. This Rubrivivax gelatinosus (strain NBRC 100245 / IL144) protein is 5'-nucleotidase SurE.